A 113-amino-acid chain; its full sequence is Nucleoid-associated protein SYNW0027 (113 aa).

This sequence belongs to the YbaB/EbfC family. Homodimer.

The protein resides in the cytoplasm. It is found in the nucleoid. Functionally, binds to DNA and alters its conformation. May be involved in regulation of gene expression, nucleoid organization and DNA protection. The polypeptide is Nucleoid-associated protein SYNW0027 (Parasynechococcus marenigrum (strain WH8102)).